Reading from the N-terminus, the 242-residue chain is Cysteine desulfuration protein SufE (242 aa).

The active-site Cysteine persulfide intermediate is the cysteine 148.

This sequence belongs to the SufE family. As to quaternary structure, monomer. Interacts with SufS; interaction enhances cysteine desulfurase activity of SufS.

The protein localises to the plastid. It localises to the apicoplast. The protein operates within cofactor biosynthesis; iron-sulfur cluster biosynthesis. Its function is as follows. Participates in sulfur mobilization (SUF) pathway for iron-sulfur (Fe-S) cluster biogenesis. Enhances cysteine desulfurase activity of SufS. Probably functions as a sulfur acceptor for SufS. This Plasmodium vivax protein is Cysteine desulfuration protein SufE.